Here is a 111-residue protein sequence, read N- to C-terminus: uncharacterized protein (111 aa).

This is an uncharacterized protein from Saccharomyces cerevisiae (strain ATCC 204508 / S288c) (Baker's yeast).